Reading from the N-terminus, the 710-residue chain is PC3-like endoprotease variant B (710 aa).

An N-terminal signal peptide occupies residues Met-1–Thr-29. N-linked (GlcNAc...) asparagine glycosylation is found at Asn-23, Asn-62, and Asn-190. Positions Val-30–Arg-152 are excised as a propeptide. Residues Met-164–Val-486 enclose the Peptidase S8 domain. Residues Asp-202 and His-242 each act as charge relay system in the active site. 2 cysteine pairs are disulfide-bonded: Cys-259–Cys-411 and Cys-351–Cys-381. Residue Ser-419 is the Charge relay system of the active site. In terms of domain architecture, P/Homo B spans Leu-495 to Lys-638. Residues Cys-501 and Cys-527 are joined by a disulfide bond. Residues Thr-668–Gln-710 form a disordered region. Positions Thr-673–Lys-684 are enriched in basic and acidic residues. Low complexity predominate over residues Asn-689–Asn-699. Residues Asn-698 and Asn-699 are each glycosylated (N-linked (GlcNAc...) asparagine).

It belongs to the peptidase S8 family. Furin subfamily. In terms of tissue distribution, predominantly in the body column.

Its function is as follows. Probably involved in the processing of hormone and other protein precursors at sites comprised of pairs of basic amino acid residues. This Hydra vulgaris (Hydra) protein is PC3-like endoprotease variant B.